Reading from the N-terminus, the 534-residue chain is Calcium uptake protein 1 homolog, mitochondrial (534 aa).

The transit peptide at 1–32 (MLHCSFLRVIPIKNASKRLIIVRSLTSAPAKT) directs the protein to the mitochondrion. The disordered stretch occupies residues 131-150 (PEASQKEEVTESNGEVEEVK). EF-hand domains follow at residues 271 to 306 (TSHA…IMSQ), 338 to 359 (KDGK…LQHD), and 466 to 501 (LSDH…RMRR). Positions 284, 286, 288, and 295 each coordinate Ca(2+).

The protein belongs to the MICU1 family. MICU1 subfamily. Expressed at low levels in PLM touch receptor neurons, germ cells, epidermis, and muscles.

It is found in the mitochondrion intermembrane space. Its subcellular location is the mitochondrion inner membrane. In terms of biological role, calcium sensor of the mitochondrial calcium uniporter (mcu-1) channel, which senses calcium level via its EF-hand domains. At low calcium levels, micu-1 occludes the pore of the mcu-1 channel, preventing mitochondrial calcium uptake. At higher calcium levels, calcium-binding to micu-1 induces a conformational change that weakens mcu-1-micu-1 interactions and moves micu-1 away from the pore, allowing calcium permeation through the mcu-1 channel. Also required to protect against manganese toxicity by preventing manganese uptake by mcu-1. Modulates the activity of the mitochondrial calcium uniporter protein mcu-1 depending on the level of intracellular calcium in PLM touch receptor neurons following axonal injury. This chain is Calcium uptake protein 1 homolog, mitochondrial, found in Caenorhabditis elegans.